Here is a 611-residue protein sequence, read N- to C-terminus: Protein PES4 (611 aa).

The disordered stretch occupies residues 37–81 (FNPVVTPIRPDDYHEKTSRSSSSSHSDSPEFLRINNNKSGHKNGK). Residues 45–54 (RPDDYHEKTS) show a composition bias toward basic and acidic residues. RRM domains lie at 91–169 (VPLF…PSLR), 179–247 (TNVF…GKKI), 303–379 (NSIF…RAQD), and 393–471 (STLF…WERQ).

Its subcellular location is the nucleus. The sequence is that of Protein PES4 (PES4) from Saccharomyces cerevisiae (strain ATCC 204508 / S288c) (Baker's yeast).